The sequence spans 617 residues: Dihydroxy-acid dehydratase (617 aa).

Mg(2+) is bound at residue aspartate 81. Cysteine 122 is a binding site for [2Fe-2S] cluster. The Mg(2+) site is built by aspartate 123 and lysine 124. An N6-carboxylysine modification is found at lysine 124. A [2Fe-2S] cluster-binding site is contributed by cysteine 195. Glutamate 490 is a binding site for Mg(2+). Serine 516 serves as the catalytic Proton acceptor.

Belongs to the IlvD/Edd family. In terms of assembly, homodimer. [2Fe-2S] cluster serves as cofactor. It depends on Mg(2+) as a cofactor.

It catalyses the reaction (2R)-2,3-dihydroxy-3-methylbutanoate = 3-methyl-2-oxobutanoate + H2O. It carries out the reaction (2R,3R)-2,3-dihydroxy-3-methylpentanoate = (S)-3-methyl-2-oxopentanoate + H2O. It participates in amino-acid biosynthesis; L-isoleucine biosynthesis; L-isoleucine from 2-oxobutanoate: step 3/4. The protein operates within amino-acid biosynthesis; L-valine biosynthesis; L-valine from pyruvate: step 3/4. Its function is as follows. Functions in the biosynthesis of branched-chain amino acids. Catalyzes the dehydration of (2R,3R)-2,3-dihydroxy-3-methylpentanoate (2,3-dihydroxy-3-methylvalerate) into 2-oxo-3-methylpentanoate (2-oxo-3-methylvalerate) and of (2R)-2,3-dihydroxy-3-methylbutanoate (2,3-dihydroxyisovalerate) into 2-oxo-3-methylbutanoate (2-oxoisovalerate), the penultimate precursor to L-isoleucine and L-valine, respectively. This Acidiphilium cryptum (strain JF-5) protein is Dihydroxy-acid dehydratase.